A 686-amino-acid chain; its full sequence is MAM domain-containing protein 2 (686 aa).

Positions 1–18 are cleaved as a signal peptide; that stretch reads MLLEGVLLVVQALQLASA. MAM domains follow at residues 24 to 169, 168 to 329, 340 to 498, and 507 to 666; these read GSCA…YCIE, IECD…HCQN, TSCD…NCRS, and GECT…PCAG. 2 N-linked (GlcNAc...) asparagine glycosylation sites follow: Asn-134 and Asn-329. Asn-524 carries an N-linked (GlcNAc...) asparagine glycan. A disordered region spans residues 665 to 686; that stretch reads AGMEDTTEQSSGYSEDLNEIEY.

O-glycosylated; contains chondroitin sulfate.

The protein localises to the secreted. It is found in the extracellular space. It localises to the extracellular matrix. The protein is MAM domain-containing protein 2 (Mamdc2) of Mus musculus (Mouse).